The following is a 338-amino-acid chain: MITIEQLISQIEQRQPVLNKAELNAEQRRLSLKGIGNLMMANRQQLSFLANPHYLSSLANTHAGAVLITAEHHNEAPNDTVALIVASPYLAYASVSQLFARQPSVSGIHPTAVIADSAVIGNQVTIGAFCVIGEQVQIGDRSALQAHVVVEDNTAIGTDCVIKPQVVIGHDCIIGNHVRLHAGVSIGSEGFGFAPTRNPSVTGWERIAQLGRVLIGNHVRIGSQTCIDRGAIDDTVIGNHVIIDNLVQVAHNVRIGDGTAIAAHTGIAGSTSIGKRCIIGGAVGITGHIDITDDVTLSGMTMVTKSITTAGSYSSGTAAMPTTNWRRAAVRFRQLGRD.

Catalysis depends on His-251, which acts as the Proton acceptor.

Belongs to the transferase hexapeptide repeat family. LpxD subfamily. As to quaternary structure, homotrimer.

It carries out the reaction a UDP-3-O-[(3R)-3-hydroxyacyl]-alpha-D-glucosamine + a (3R)-hydroxyacyl-[ACP] = a UDP-2-N,3-O-bis[(3R)-3-hydroxyacyl]-alpha-D-glucosamine + holo-[ACP] + H(+). It functions in the pathway bacterial outer membrane biogenesis; LPS lipid A biosynthesis. In terms of biological role, catalyzes the N-acylation of UDP-3-O-acylglucosamine using 3-hydroxyacyl-ACP as the acyl donor. Is involved in the biosynthesis of lipid A, a phosphorylated glycolipid that anchors the lipopolysaccharide to the outer membrane of the cell. This chain is UDP-3-O-acylglucosamine N-acyltransferase, found in Psychrobacter arcticus (strain DSM 17307 / VKM B-2377 / 273-4).